The primary structure comprises 321 residues: Torsin-2A (321 aa).

An N-terminal signal peptide occupies residues methionine 1–alanine 26. Glycine 93–serine 100 is an ATP binding site. Asparagine 149 carries an N-linked (GlcNAc...) asparagine glycan.

It belongs to the ClpA/ClpB family. Torsin subfamily. Homohexamer. Interacts with TOR1AIP1. In terms of tissue distribution, isoform 1 is expressed ubiquitously, except in cardiac and endothelial tissues.

It localises to the endoplasmic reticulum lumen. This chain is Torsin-2A (TOR2A), found in Homo sapiens (Human).